The chain runs to 236 residues: Small ribosomal subunit protein uS3 (236 aa).

Positions 39-107 (IREFLTEELK…DTSLNIVEVR (69 aa)) constitute a KH type-2 domain. The interval 214 to 236 (ASERRAVEGDNQGSSSNRRRENA) is disordered.

This sequence belongs to the universal ribosomal protein uS3 family. As to quaternary structure, part of the 30S ribosomal subunit. Forms a tight complex with proteins S10 and S14.

In terms of biological role, binds the lower part of the 30S subunit head. Binds mRNA in the 70S ribosome, positioning it for translation. This chain is Small ribosomal subunit protein uS3, found in Brucella melitensis biotype 1 (strain ATCC 23456 / CCUG 17765 / NCTC 10094 / 16M).